A 229-amino-acid polypeptide reads, in one-letter code: NAD-dependent protein deacetylase (229 aa).

The Deacetylase sirtuin-type domain occupies 1 to 229 (MNNLKEAIKQ…NDAVKVFAEI (229 aa)). Residues alanine 20, arginine 32, glutamine 96, isoleucine 98, aspartate 99, histidine 114, threonine 181, serine 182, asparagine 205, and valine 223 each contribute to the NAD(+) site. Residues isoleucine 98 and aspartate 99 each contribute to the nicotinamide site. The active-site Proton acceptor is the histidine 114.

Belongs to the sirtuin family. Class U subfamily.

It localises to the cytoplasm. It catalyses the reaction N(6)-acetyl-L-lysyl-[protein] + NAD(+) + H2O = 2''-O-acetyl-ADP-D-ribose + nicotinamide + L-lysyl-[protein]. Its function is as follows. NAD-dependent protein deacetylase which modulates the activities of several enzymes which are inactive in their acetylated form. This Listeria innocua serovar 6a (strain ATCC BAA-680 / CLIP 11262) protein is NAD-dependent protein deacetylase.